The chain runs to 418 residues: Glutamyl-tRNA reductase (418 aa).

Substrate is bound by residues 49 to 52 (TCNR), Ser-107, 112 to 114 (EPQ), and Gln-118. Residue Cys-50 is the Nucleophile of the active site. 187 to 192 (GAGETI) provides a ligand contact to NADP(+).

Belongs to the glutamyl-tRNA reductase family. As to quaternary structure, homodimer.

The enzyme catalyses (S)-4-amino-5-oxopentanoate + tRNA(Glu) + NADP(+) = L-glutamyl-tRNA(Glu) + NADPH + H(+). The protein operates within porphyrin-containing compound metabolism; protoporphyrin-IX biosynthesis; 5-aminolevulinate from L-glutamyl-tRNA(Glu): step 1/2. Its function is as follows. Catalyzes the NADPH-dependent reduction of glutamyl-tRNA(Glu) to glutamate 1-semialdehyde (GSA). The polypeptide is Glutamyl-tRNA reductase (Vibrio campbellii (strain ATCC BAA-1116)).